Reading from the N-terminus, the 343-residue chain is Glyceraldehyde-3-phosphate dehydrogenase 1 (343 aa).

Residues 13-14 (RI), Asp35, Arg79, and Ser121 each bind NAD(+). Residues 154-156 (SCT), Thr185, 214-215 (TG), and Arg237 contribute to the D-glyceraldehyde 3-phosphate site. The Nucleophile role is filled by Cys155. Asn319 serves as a coordination point for NAD(+).

It belongs to the glyceraldehyde-3-phosphate dehydrogenase family. In terms of assembly, homotetramer.

The protein resides in the cytoplasm. It catalyses the reaction D-glyceraldehyde 3-phosphate + phosphate + NAD(+) = (2R)-3-phospho-glyceroyl phosphate + NADH + H(+). It functions in the pathway carbohydrate degradation; glycolysis; pyruvate from D-glyceraldehyde 3-phosphate: step 1/5. Catalyzes the oxidative phosphorylation of glyceraldehyde 3-phosphate (G3P) to 1,3-bisphosphoglycerate (BPG) using the cofactor NAD. The first reaction step involves the formation of a hemiacetal intermediate between G3P and a cysteine residue, and this hemiacetal intermediate is then oxidized to a thioester, with concomitant reduction of NAD to NADH. The reduced NADH is then exchanged with the second NAD, and the thioester is attacked by a nucleophilic inorganic phosphate to produce BPG. This chain is Glyceraldehyde-3-phosphate dehydrogenase 1 (gap1), found in Nostoc sp. (strain PCC 7120 / SAG 25.82 / UTEX 2576).